Reading from the N-terminus, the 753-residue chain is 5-methyltetrahydropteroyltriglutamate--homocysteine methyltransferase (753 aa).

5-methyltetrahydropteroyltri-L-glutamate-binding positions include 17 to 20 (RELK) and Lys117. Residues 431-433 (IGS) and Glu484 contribute to the L-homocysteine site. Residues 431-433 (IGS) and Glu484 contribute to the L-methionine site. Residues 515-516 (RC) and Trp561 each bind 5-methyltetrahydropteroyltri-L-glutamate. Residue Asp599 participates in L-homocysteine binding. Residue Asp599 coordinates L-methionine. Glu605 provides a ligand contact to 5-methyltetrahydropteroyltri-L-glutamate. The Zn(2+) site is built by His641, Cys643, and Glu665. His694 serves as the catalytic Proton donor. Cys726 lines the Zn(2+) pocket.

This sequence belongs to the vitamin-B12 independent methionine synthase family. Zn(2+) is required as a cofactor.

The catalysed reaction is 5-methyltetrahydropteroyltri-L-glutamate + L-homocysteine = tetrahydropteroyltri-L-glutamate + L-methionine. It participates in amino-acid biosynthesis; L-methionine biosynthesis via de novo pathway; L-methionine from L-homocysteine (MetE route): step 1/1. Functionally, catalyzes the transfer of a methyl group from 5-methyltetrahydrofolate to homocysteine resulting in methionine formation. This chain is 5-methyltetrahydropteroyltriglutamate--homocysteine methyltransferase, found in Escherichia coli O9:H4 (strain HS).